Here is a 466-residue protein sequence, read N- to C-terminus: Ribulose bisphosphate carboxylase large chain (466 aa).

An N6,N6,N6-trimethyllysine modification is found at Lys5. Asn114 and Thr164 together coordinate substrate. Lys166 functions as the Proton acceptor in the catalytic mechanism. Substrate is bound at residue Lys168. Mg(2+)-binding residues include Lys192, Asp194, and Glu195. Lys192 is modified (N6-carboxylysine). The active-site Proton acceptor is His285. Arg286, His318, and Ser370 together coordinate substrate.

This sequence belongs to the RuBisCO large chain family. Type I subfamily. As to quaternary structure, heterohexadecamer of 8 large chains and 8 small chains; disulfide-linked. The disulfide link is formed within the large subunit homodimers. Mg(2+) serves as cofactor. The disulfide bond which can form in the large chain dimeric partners within the hexadecamer appears to be associated with oxidative stress and protein turnover.

It is found in the plastid. Its subcellular location is the chloroplast. It catalyses the reaction 2 (2R)-3-phosphoglycerate + 2 H(+) = D-ribulose 1,5-bisphosphate + CO2 + H2O. It carries out the reaction D-ribulose 1,5-bisphosphate + O2 = 2-phosphoglycolate + (2R)-3-phosphoglycerate + 2 H(+). Functionally, ruBisCO catalyzes two reactions: the carboxylation of D-ribulose 1,5-bisphosphate, the primary event in carbon dioxide fixation, as well as the oxidative fragmentation of the pentose substrate in the photorespiration process. Both reactions occur simultaneously and in competition at the same active site. The chain is Ribulose bisphosphate carboxylase large chain from Gonopterodendron arboreum (Maracaibo lignum-vitae).